The chain runs to 641 residues: Epsin-2 (641 aa).

Residues Arg-8, Lys-11, Arg-25, Asn-30, Arg-63, and His-73 each coordinate a 1,2-diacyl-sn-glycero-3-phospho-(1D-myo-inositol-4,5-bisphosphate). In terms of domain architecture, ENTH spans 12-144 (NIVNNYSEAE…KDEERLKAER (133 aa)). Arg-153 and Gln-156 each carry phosphoserine. Polar residues predominate over residues 163–181 (SNQITFGRGSSQPNLSTSH). 2 disordered regions span residues 163 to 214 (SNQI…GAPL) and 255 to 275 (RATS…TSGE). Omega-N-methylarginine is present on Arg-170. Phosphoserine occurs at positions 173, 192, and 195. Residues 259 to 273 (PRVSSELEQARPQTS) are compositionally biased toward polar residues. 2 UIM domains span residues 275 to 294 (EEEL…AEQE) and 300 to 319 (GDDL…TVKI). Residues 340 to 425 (ALPSSGPAAQ…QPASSAGKRA (86 aa)) form a disordered region. 6 consecutive repeat copies span residues 352–354 (EPW), 364–366 (NPW), 377–379 (DPW), 391–393 (DPW), 409–411 (DPW), and 427–429 (DAW). Positions 352 to 639 (EPWGPSASTN…AQATGTTNPF (288 aa)) are 6 X 3 AA repeats of [DE]-P-W. Positions 408–421 (SDPWAASQQPASSA) are enriched in low complexity. The segment at 470-512 (TAESVTSLPSQNNGTTSPDPFESQPLTVASSKPSSARKTPESF) is disordered. The span at 472–506 (ESVTSLPSQNNGTTSPDPFESQPLTVASSKPSSAR) shows a compositional bias: polar residues. Ser-486 is modified (phosphoserine). Thr-508 bears the Phosphothreonine mark. Repeat copies occupy residues 537-539 (NPF) and 552-554 (NPF). Residues 537–639 (NPFLAPGAPA…AQATGTTNPF (103 aa)) are 3 X 3 AA repeats of N-P-F. The residue at position 570 (Ser-570) is a Phosphoserine. Repeat unit 3 spans residues 637 to 639 (NPF).

It belongs to the epsin family. As to quaternary structure, binds EPS15. Interacts with ITSN1. Binds AP-2 and clathrin. Interacts with UBQLN2. Ubiquitinated. As to expression, highest expression is found in brain. Detected at lower levels in lung and liver.

It localises to the cytoplasm. It is found in the cytoplasmic vesicle. The protein localises to the clathrin-coated vesicle. In terms of biological role, plays a role in the formation of clathrin-coated invaginations and endocytosis. The sequence is that of Epsin-2 (EPN2) from Homo sapiens (Human).